The primary structure comprises 485 residues: FAD-dependent monooxygenase elcH (485 aa).

Residues Met-1–Ala-19 form the signal peptide. Positions 59 and 73 each coordinate FAD. N-linked (GlcNAc...) asparagine glycosylation is found at Asn-126, Asn-147, and Asn-157.

The protein belongs to the paxM FAD-dependent monooxygenase family. FAD is required as a cofactor.

It functions in the pathway secondary metabolite biosynthesis. Functionally, FAD-dependent monooxygenase; part of the gene cluster that mediates the biosynthesis of elsinochrome C, a perelyenequinone phytotoxin structurally similar to cercosporin. The first step of elsinochrome C biosynthesis is performed by the polyketide synthase elcA which catalyzes the formation of nor-toralactone. The starter unit acyltransferase (SAT) domain of elcA initiates polyketide extension by the selective utilization of acetyl-CoA, which is elongated to the heptaketide in the beta-ketoacyl synthase (KS) domain by successive condensations with six malonyl units introduced by the malonyl acyltransferase (MAT) domain. The product template (PT) domain catalyzes C4-C9 and C2-C11 aldol cyclizations and dehydrations to a trihydroxynaphthalene, which is thought to be delivered to the thioesterase (TE) domain for product release. The bifunctional enzyme elcB then methylates nor-toralactone to toralactone before conducting an unusual oxidative aromatic ring opening. The next step in perylenequinone biosynthesis is an O-methylation at the nascent OH-6 of the elcB product performed by the O-methyltransferase elcD. The oxidative coupling of the two monomeric naphthol units in perylenequinone biosynthesis is catalyzed by the FAD-dependent monooxygenase elcE and the multicopper oxidase elcG. ElcG might catalyze the first intermolecular coupling in a regio- and stereo-selective manner via a phenol radical coupling mechanism and the elcE could forge the second C-C bond intramolecularly via a hydride transfer mechanism. The fasciclin domain-containing protein elcF might also play a role duting this step. The last piece of the puzzle in the biosynthesis of elsinochrome C is the additional annulation by enolate coupling to afford the dihydrobenzo(ghi)perylenequinone system, catalyzed by the FAD-dependent monooxygenase elcH. The sequence is that of FAD-dependent monooxygenase elcH from Phaeosphaeria nodorum (strain SN15 / ATCC MYA-4574 / FGSC 10173) (Glume blotch fungus).